We begin with the raw amino-acid sequence, 429 residues long: 3-phosphoshikimate 1-carboxyvinyltransferase (429 aa).

3-phosphoshikimate is bound by residues Lys11, Ser12, and Arg16. Lys11 contacts phosphoenolpyruvate. Phosphoenolpyruvate-binding residues include Gly82 and Arg110. 3-phosphoshikimate contacts are provided by Ser155, Gln157, Asp302, and Lys329. Gln157 serves as a coordination point for phosphoenolpyruvate. Asp302 serves as the catalytic Proton acceptor. Phosphoenolpyruvate-binding residues include Arg333 and Arg385.

This sequence belongs to the EPSP synthase family. Monomer.

Its subcellular location is the cytoplasm. The catalysed reaction is 3-phosphoshikimate + phosphoenolpyruvate = 5-O-(1-carboxyvinyl)-3-phosphoshikimate + phosphate. It participates in metabolic intermediate biosynthesis; chorismate biosynthesis; chorismate from D-erythrose 4-phosphate and phosphoenolpyruvate: step 6/7. Its function is as follows. Catalyzes the transfer of the enolpyruvyl moiety of phosphoenolpyruvate (PEP) to the 5-hydroxyl of shikimate-3-phosphate (S3P) to produce enolpyruvyl shikimate-3-phosphate and inorganic phosphate. In Helicobacter pylori (strain G27), this protein is 3-phosphoshikimate 1-carboxyvinyltransferase.